Here is a 384-residue protein sequence, read N- to C-terminus: Bifunctional enzyme IspD/IspF (384 aa).

Residues 1-226 (MAKTVVLVVA…RCLFDGPGEV (226 aa)) form a 2-C-methyl-D-erythritol 4-phosphate cytidylyltransferase region. A 2-C-methyl-D-erythritol 2,4-cyclodiphosphate synthase region spans residues 227 to 384 (RSASGYDVHR…QAMASVWLPR (158 aa)). Asp-233 and His-235 together coordinate a divalent metal cation. Residues 233 to 235 (DVH) and 260 to 261 (HS) contribute to the 4-CDP-2-C-methyl-D-erythritol 2-phosphate site. His-268 contacts a divalent metal cation. 4-CDP-2-C-methyl-D-erythritol 2-phosphate is bound by residues 282–284 (DIG), 358–361 (TTTE), Phe-365, and Arg-368.

In the N-terminal section; belongs to the IspD/TarI cytidylyltransferase family. IspD subfamily. It in the C-terminal section; belongs to the IspF family. Requires a divalent metal cation as cofactor.

It carries out the reaction 2-C-methyl-D-erythritol 4-phosphate + CTP + H(+) = 4-CDP-2-C-methyl-D-erythritol + diphosphate. The enzyme catalyses 4-CDP-2-C-methyl-D-erythritol 2-phosphate = 2-C-methyl-D-erythritol 2,4-cyclic diphosphate + CMP. It functions in the pathway isoprenoid biosynthesis; isopentenyl diphosphate biosynthesis via DXP pathway; isopentenyl diphosphate from 1-deoxy-D-xylulose 5-phosphate: step 2/6. Its pathway is isoprenoid biosynthesis; isopentenyl diphosphate biosynthesis via DXP pathway; isopentenyl diphosphate from 1-deoxy-D-xylulose 5-phosphate: step 4/6. Bifunctional enzyme that catalyzes the formation of 4-diphosphocytidyl-2-C-methyl-D-erythritol from CTP and 2-C-methyl-D-erythritol 4-phosphate (MEP) (IspD), and catalyzes the conversion of 4-diphosphocytidyl-2-C-methyl-D-erythritol 2-phosphate (CDP-ME2P) to 2-C-methyl-D-erythritol 2,4-cyclodiphosphate (ME-CPP) with a corresponding release of cytidine 5-monophosphate (CMP) (IspF). The polypeptide is Bifunctional enzyme IspD/IspF (Paramagnetospirillum magneticum (strain ATCC 700264 / AMB-1) (Magnetospirillum magneticum)).